The primary structure comprises 207 residues: MKSSNGPLRIGIGGPVGSGKTTLCEVLLKSMRDRYSMAVVTNDIYTKEDALILARLQAISEDRIVGVETGGCPHTAIREDASLNLAAIAHLNRRFPDLDIILIESGGDNLAATFSPDLADLTLYVISVAQGEKIPRKGGPAITRSDLLIINKTDLAPYVGANLDVMRSDTEKVREGRPYVMTDLSRRQGAEEVVAFIEKMGGLALAA.

14–21 contributes to the GTP binding site; sequence GPVGSGKT.

The protein belongs to the SIMIBI class G3E GTPase family. UreG subfamily. In terms of assembly, homodimer. UreD, UreF and UreG form a complex that acts as a GTP-hydrolysis-dependent molecular chaperone, activating the urease apoprotein by helping to assemble the nickel containing metallocenter of UreC. The UreE protein probably delivers the nickel.

It localises to the cytoplasm. Its function is as follows. Facilitates the functional incorporation of the urease nickel metallocenter. This process requires GTP hydrolysis, probably effectuated by UreG. The protein is Urease accessory protein UreG of Chelativorans sp. (strain BNC1).